The sequence spans 1374 residues: Tripeptidyl-peptidase 2 (1374 aa).

The region spanning 62-558 (ALLLNKTDTE…QGMIKIATAY (497 aa)) is the Peptidase S8 domain. Catalysis depends on charge relay system residues Asp93, His314, and Ser499.

The protein belongs to the peptidase S8 family. In terms of tissue distribution, expressed in intestinal fat-storing cells and some head neurons.

The catalysed reaction is Release of an N-terminal tripeptide from a polypeptide.. In terms of biological role, component of the proteolytic cascade acting downstream of the 26S proteasome in the ubiquitin-proteasome pathway. Has a role in regulation of fat storage. The sequence is that of Tripeptidyl-peptidase 2 (tpp-2) from Caenorhabditis elegans.